The chain runs to 93 residues: Acylphosphatase (93 aa).

C5 and C49 are joined by a disulfide. The Acylphosphatase-like domain maps to 5–93 (CIIAWVYGRV…ETLTGFSIRY (89 aa)). Catalysis depends on residues R20 and N38.

Belongs to the acylphosphatase family.

It catalyses the reaction an acyl phosphate + H2O = a carboxylate + phosphate + H(+). The chain is Acylphosphatase from Salmonella typhi.